Here is a 1366-residue protein sequence, read N- to C-terminus: DNA-directed RNA polymerase subunit beta' (1366 aa).

A compositionally biased stretch (basic residues) spans 1-23 (MTSSKPKKSSRVRKTTKNSKKNH). The segment at 1 to 37 (MTSSKPKKSSRVRKTTKNSKKNHNTMMPLLPKTPPSF) is disordered. Residues C248, C315, C322, and C325 each contribute to the Zn(2+) site. Positions 1304–1366 (TAILDDPSDE…LQEEGLLSDG (63 aa)) are disordered. Residues 1354 to 1366 (LEGLQEEGLLSDG) show a composition bias toward low complexity.

It belongs to the RNA polymerase beta' chain family. RpoC2 subfamily. In cyanobacteria the RNAP catalytic core is composed of 2 alpha, 1 beta, 1 beta', 1 gamma and 1 omega subunit. When a sigma factor is associated with the core the holoenzyme is formed, which can initiate transcription. Zn(2+) is required as a cofactor.

It catalyses the reaction RNA(n) + a ribonucleoside 5'-triphosphate = RNA(n+1) + diphosphate. Its function is as follows. DNA-dependent RNA polymerase catalyzes the transcription of DNA into RNA using the four ribonucleoside triphosphates as substrates. In Prochlorococcus marinus subsp. pastoris (strain CCMP1986 / NIES-2087 / MED4), this protein is DNA-directed RNA polymerase subunit beta'.